The following is a 1902-amino-acid chain: MLTDFLQAPVMAPWSPFSLHLLLLFLLLLPLTRAHRFSVPNASFNHLVLAPDQGKLYVGAVNHLFQLSPELEMESVAITGPVIDSPDCVPFRDLAECPQAQLTDNANQLLLVSSRAQELVACGQVRQGVCEKRRLGDVTQVLYQAEDPGDGQFVAANTLGVTTVGLVVPLPGRDLLLVARGLAGKLSAGVPPLTVRQLAGPQPFSSEGLGRLVVGDFSDYNNSYVGAFSDAHSAYFVFRRRGARAQTEYRSYVARVCLGDVNLYSYVEVPLTCHGQGLIQAAFLAPDTLLGAFSAGTSQAQAALCAFPLADLDGSMEQARRLCYTTGGQGPNGMEEATVEYGVTSRCVTLPPDSPESYPCGDEHTPSPIAGRQPLEAQPLLQLGQPISAVAALQTDGHTIAFLGDTEGQLHKVFLNSSHGQVYHSQQVGPPGSAISPDLLVDNSGDYLYVLTAQQVDRILVAACPQFPNCTTCLQARDPLCGWCILQGRCTRRAECGRAVQPNQWLWSYEDNHCLHIQSLLPAQHPRQEHGQITLSVPGLPNLAMDEYFYCAFGDYNSLAQVEEHHVVCATPPQDRMPPNPPGSDHVTLPLALMFEDVVLAATTFSFYDCSAIQALEVAAPCRTCVSSLWRCHWCPQSSHCVYGERCPEGEKAVYSAQEVDILVRGPEACPQVKGLASPQLVPVGWESHVTLHIENLHYFRGLPALYYCWLELPGKLRKLPAFLEETSRNSGLIHCQAQQFHPSMSQWELPVPIYVTRGEIQRLDNTGDLHVTLYDCAMGHPDCSHCQAANGSLSCLWCGDGQPACRYGPLCPPGAVEQLCPIPSIDVIEPLTGPPEGGLAITILGSNLGQAFNDVRNAVTVAGQPCNPDPSLYRISARIVCVTSPAPNGTSGPVQVAIKSRPPGISAQHFTYQDPVLLSLNPQWGPQAGGTQLTIHGQYLQTGGNVSAFVGDQPCPIQEPVCPEAIICHTMPQMEPGEAVVFVVFGHVERKLLTTPFRYTANPQLVEAEPSVSFRGGGRVIRVRGTGLDVVWQPLLSVWLEDEFQVKALGVQAQDVNPRRSCGAPAADPQACIHLESGLLQCSTLCSVNSSSLLLCHSPAVPDGALPKRVFFALDNMQVDFASASGGQGFLYQPNPRLAPLSHEGITHPYRLKPGHVLDVEGEGLNLGISKEEVQVHIGDGKCLVKTLTLTHLYCEPPQQAPQPTNGSGTLPQFVVQMGNVRLALGPVQYEAEPMISTFPVEAQVGLGMGAAMLIAAVLLLTLMYRHKSKQALRDYQKVLVQLENLETGVGDQCRKEFTDLMTEMTDLTSDLEASGIPFLDYRTYAERAFFPGHVGCPLQPGLEGPGEEGRRVTVCQGLTQLSNLLNSKLFLLTLIHTLEEQPSFSQRDRCHVASLLSLALHSKLEYLTDIMRTLLGDLAAHYVHKNPKLMLRRTETMVEKLLTNWLSICLYAFLKEVAGEPLYMLFRAIKYQVDKGPVDAVTGKAKRTLNDSHLLREDVEFRPLTLMALVGPGAGGAAGNSEVHRVPARVLDTDTITQVKEKVLDQIYKGTPFSQRPSVHSLDLEWRSGLAGHLTLSDEDLTSVTQNHWKRLNTLQHYKVPDGATVVLIPQLHNGGTVSQSLEQTGCHSGENTPMLEDGEEGGVRLWHLVKATEETEGAKVRRSSLRERERERARAKAIPEIYLTRLLSMKGTLQKFVDDTFQAILSMNRPVPIAVKYLFDFLDELAEKHGIEDPETLHIWKTNSLLLRFWVNALKNPQLIFDVRVSDNEDAILAVIAQTFIDSCMVSEHKVGRDSPVNKLLYAREIPRYKQMVEKYYADIRQSSPASYQEMNSALAELSGNYTSAPNCLEALRELYNHIHRYYDQIISALEEDPVAQKMQLACRLQQVAALVEYKVTDL.

The first 34 residues, 1–34 (MLTDFLQAPVMAPWSPFSLHLLLLFLLLLPLTRA), serve as a signal peptide directing secretion. One can recognise a Sema domain in the interval 35–461 (HRFSVPNASF…TAQQVDRILV (427 aa)). Residues 35–1245 (HRFSVPNASF…MISTFPVEAQ (1211 aa)) lie on the Extracellular side of the membrane. N-linked (GlcNAc...) asparagine glycosylation is present at Asn-41. 2 disulfide bridges follow: Cys-88/Cys-97 and Cys-122/Cys-130. N-linked (GlcNAc...) asparagine glycosylation occurs at Asn-221. Disulfide bonds link Cys-257-Cys-360, Cys-273-Cys-305, and Cys-323-Cys-347. The interval 353 to 372 (DSPESYPCGDEHTPSPIAGR) is disordered. Asn-416 and Asn-469 each carry an N-linked (GlcNAc...) asparagine glycan. Residues 463–515 (ACPQFPNCTTCLQARDPLCGWCILQGRCTRRAECGRAVQPNQWLWSYEDNHCL) form the PSI 1 domain. 5 cysteine pairs are disulfide-bonded: Cys-464-Cys-481, Cys-470-Cys-514, Cys-473-Cys-490, Cys-484-Cys-496, and Cys-551-Cys-569. PSI domains are found at residues 609-671 (DCSA…EACP) and 776-822 (DCAM…QLCP). N-linked (GlcNAc...) asparagine glycosylation is found at Asn-791, Asn-889, Asn-946, Asn-1090, and Asn-1207. 3 consecutive IPT/TIG domains span residues 824-913 (PSID…HFTY), 915-1001 (DPVL…FRYT), and 1003-1134 (NPQL…FLYQ). The helical transmembrane segment at 1246 to 1266 (VGLGMGAAMLIAAVLLLTLMY) threads the bilayer. Residues 1267–1902 (RHKSKQALRD…ALVEYKVTDL (636 aa)) are Cytoplasmic-facing.

Belongs to the plexin family. Binds MET and MST1R. Interacts with RIT2/RIN. Interacts (via cytoplasmic domain) with FSCN1 and RAC1. May form homodimers (via Sema domain). Interacts (via cytoplasmic domain) with ARHGDIA. In terms of tissue distribution, expressed in glioma cells (at protein level). Expressed in glioma cells and oligodendrocyte precursor cells.

It is found in the cell membrane. Receptor for SEMA5A that plays a role in axon guidance, invasive growth and cell migration. Stimulates neurite outgrowth and mediates Ca(2+)/Mg(2+)-dependent cell aggregation. In glioma cells, SEMA5A stimulation of PLXNB3 results in the disassembly of F-actin stress fibers, disruption of focal adhesions and cellular collapse as well as inhibition of cell migration and invasion through ARHGDIA-mediated inactivation of RAC1. This is Plexin-B3 (Plxnb3) from Rattus norvegicus (Rat).